We begin with the raw amino-acid sequence, 142 residues long: Glia maturation factor gamma (142 aa).

S2 carries the post-translational modification N-acetylserine. One can recognise an ADF-H domain in the interval S4–A139.

It belongs to the actin-binding proteins ADF family. GMF subfamily.

The sequence is that of Glia maturation factor gamma (Gmfg) from Mus musculus (Mouse).